Consider the following 762-residue polypeptide: Putative BTB/POZ domain-containing protein L272 (762 aa).

The BTB domain maps to 16–86; that stretch reads TDITIILKDE…FYGQKIKSHN (71 aa). Positions 390–410 are enriched in acidic residues; the sequence is DLDNSNDLNDSNDLDDSDDSN. 2 disordered regions span residues 390–411 and 532–556; these read DLDN…DSND and ISDN…NSDN. Low complexity predominate over residues 532 to 543; that stretch reads ISDNSDNLNNSD. Residues 737 to 762 are a coiled coil; the sequence is FSENYCDELINRLNNALKKIEQKYPN.

This sequence belongs to the mimivirus BTB/WD family.

The chain is Putative BTB/POZ domain-containing protein L272 from Acanthamoeba polyphaga (Amoeba).